The following is a 670-amino-acid chain: PML-RARA-regulated adapter molecule 1 (670 aa).

The tract at residues 1–561 is disordered; the sequence is MAHHLPAAME…PQQLPPMDPK (561 aa). A compositionally biased stretch (basic and acidic residues) spans 31–43; that stretch reads DLPKKPPKPEFGK. 4 tandem repeats follow at residues 70–81, 82–93, 94–105, and 106–117. The tract at residues 70–165 is 4 X 12 AA repeats of K-P-P-[PQ]-P-[EQ]-[VAF]-T-D-L-P-K; the sequence is KPPPPEVTDL…SLPEPGAPAR (96 aa). Residues 114–129 are compositionally biased toward basic and acidic residues; it reads DLPKKPSKLELSDLSK. S340 is modified (phosphoserine). The segment covering 386–398 has biased composition (low complexity); that stretch reads SSASESSLPAAVA. Positions 454 to 463 are enriched in pro residues; the sequence is PAKPPLPPGP. Residues 504–514 show a composition bias toward acidic residues; the sequence is EIYELYDDVEP. Positions 515 to 528 are enriched in basic and acidic residues; sequence RDDSSPSPKGRDEA. The SH3 domain occupies 571–649; that stretch reads KAEREFRKKF…PRTALLPLET (79 aa).

In terms of assembly, interacts with SKAP2, LCP2 and DBNL. May interact with LYN. Interacts with NEK6. Post-translationally, may be phosphorylated on tyrosines. In terms of tissue distribution, expressed in peripheral blood leukocytes and bone marrow. Expressed in monocytes, and to a lesser extent in granulocytes and lymphocytes. Not expressed in non hematopoietic tissues except in lung.

Functionally, may be involved in myeloid differentiation. May be involved in integrin signaling in neutrophils. Binds to PtdIns(4)P. The chain is PML-RARA-regulated adapter molecule 1 (PRAM1) from Homo sapiens (Human).